Here is a 230-residue protein sequence, read N- to C-terminus: Ribosomal RNA small subunit methyltransferase G (230 aa).

S-adenosyl-L-methionine is bound by residues Gly-91, Leu-96, 142–143, and Arg-161; that span reads VE.

Belongs to the methyltransferase superfamily. RNA methyltransferase RsmG family.

The protein resides in the cytoplasm. The catalysed reaction is guanosine(527) in 16S rRNA + S-adenosyl-L-methionine = N(7)-methylguanosine(527) in 16S rRNA + S-adenosyl-L-homocysteine. Its function is as follows. Specifically methylates the N7 position of guanine in position 527 of 16S rRNA. This is Ribosomal RNA small subunit methyltransferase G from Burkholderia pseudomallei (strain K96243).